A 275-amino-acid chain; its full sequence is NADPH-dependent 7-cyano-7-deazaguanine reductase (275 aa).

Substrate is bound at residue 81 to 83 (IES). 83-84 (SK) is an NADPH binding site. The active-site Thioimide intermediate is Cys-181. The active-site Proton donor is Asp-188. 220-221 (HE) provides a ligand contact to substrate. 249–250 (RG) is an NADPH binding site.

The protein belongs to the GTP cyclohydrolase I family. QueF type 2 subfamily. As to quaternary structure, homodimer.

It is found in the cytoplasm. The catalysed reaction is 7-aminomethyl-7-carbaguanine + 2 NADP(+) = 7-cyano-7-deazaguanine + 2 NADPH + 3 H(+). The protein operates within tRNA modification; tRNA-queuosine biosynthesis. Catalyzes the NADPH-dependent reduction of 7-cyano-7-deazaguanine (preQ0) to 7-aminomethyl-7-deazaguanine (preQ1). The protein is NADPH-dependent 7-cyano-7-deazaguanine reductase of Xylella fastidiosa (strain M23).